Consider the following 313-residue polypeptide: MWWVRRTRYWFSTLLYAGGARLRPGRRTASGGLETPGSCGAELQGELDRFGGVSVHLSRHHTLHGLDAAAFRRLLQAAIQQWRSDGRIAAWLHIPILQSHFIAPAASLGFCFHHAKPHSSTLTLWLGEGPSRLPGYATHQVGVAGAVFDVSTRKVLVVQDRNKLKNMWKFPGGLSEPGEDIADTAVREVFEETGVKSEFRSLLSIRQQHRSPGAFGMSDMYLVCRLQPRSFTINFCQQECLKCEWIDLENLARTKHTTPITSRVARLLLYGLREGFDKIDLSMEELPAVYTGLFYKLYHRELPESYKAATGAD.

Positions 138 to 270 (THQVGVAGAV…TSRVARLLLY (133 aa)) constitute a Nudix hydrolase domain.

This sequence belongs to the Nudix hydrolase family. Monomer and homodimer.

The protein resides in the cytoplasm. It is found in the nucleus. It localises to the mitochondrion. Functionally, may contribute to the regulation of cell proliferation. In Mus musculus (Mouse), this protein is Nucleoside diphosphate-linked moiety X motif 6 (Nudt6).